The primary structure comprises 158 residues: Cyclic pyranopterin monophosphate synthase (158 aa).

Substrate contacts are provided by residues 75–77 (LCH) and 113–114 (ME). Aspartate 128 is an active-site residue.

Belongs to the MoaC family. Homohexamer; trimer of dimers.

It catalyses the reaction (8S)-3',8-cyclo-7,8-dihydroguanosine 5'-triphosphate = cyclic pyranopterin phosphate + diphosphate. It functions in the pathway cofactor biosynthesis; molybdopterin biosynthesis. Catalyzes the conversion of (8S)-3',8-cyclo-7,8-dihydroguanosine 5'-triphosphate to cyclic pyranopterin monophosphate (cPMP). This Vibrio campbellii (strain ATCC BAA-1116) protein is Cyclic pyranopterin monophosphate synthase.